Reading from the N-terminus, the 133-residue chain is CDGSH iron-sulfur domain-containing protein 2 homolog (133 aa).

At 1-35 the chain is on the lumenal side; sequence MEPISHLVKSSLPNYLSSLPIPDSIGGWFKLSFKD. The helical transmembrane segment at 36-58 threads the bilayer; it reads WLALIPPTVVVAGLGYTAYLAYC. At 59-133 the chain is on the cytoplasmic side; sequence PAAQGSCSAK…DNVGPIVIKK (75 aa). [2Fe-2S] cluster contacts are provided by Cys100, Cys102, Cys111, and His115.

Belongs to the CISD protein family. CISD2 subfamily. It depends on [2Fe-2S] cluster as a cofactor.

The protein resides in the endoplasmic reticulum membrane. The protein is CDGSH iron-sulfur domain-containing protein 2 homolog of Drosophila erecta (Fruit fly).